The chain runs to 482 residues: tRNA modification GTPase MnmE (482 aa).

Residues R25, E82, and K135 each contribute to the (6S)-5-formyl-5,6,7,8-tetrahydrofolate site. The region spanning 231–404 is the TrmE-type G domain; the sequence is GIKVVIAGQP…LRRVLLDIAG (174 aa). N241 is a K(+) binding site. GTP is bound by residues 241-246, 260-266, 285-288, and 385-387; these read NAGKSS, TPIAGTT, DTAG, and SAR. S245 serves as a coordination point for Mg(2+). K(+) contacts are provided by T260, I262, and T265. T266 lines the Mg(2+) pocket. Residue K482 participates in (6S)-5-formyl-5,6,7,8-tetrahydrofolate binding.

This sequence belongs to the TRAFAC class TrmE-Era-EngA-EngB-Septin-like GTPase superfamily. TrmE GTPase family. Homodimer. Heterotetramer of two MnmE and two MnmG subunits. It depends on K(+) as a cofactor.

It is found in the cytoplasm. Exhibits a very high intrinsic GTPase hydrolysis rate. Involved in the addition of a carboxymethylaminomethyl (cmnm) group at the wobble position (U34) of certain tRNAs, forming tRNA-cmnm(5)s(2)U34. This Paracidovorax citrulli (strain AAC00-1) (Acidovorax citrulli) protein is tRNA modification GTPase MnmE.